Here is a 200-residue protein sequence, read N- to C-terminus: Large ribosomal subunit protein uL4 (200 aa).

Positions 42 to 69 are disordered; that stretch reads SKAQKNRSDVSGGGRKPWRQKGTGRARA.

This sequence belongs to the universal ribosomal protein uL4 family. As to quaternary structure, part of the 50S ribosomal subunit.

Functionally, one of the primary rRNA binding proteins, this protein initially binds near the 5'-end of the 23S rRNA. It is important during the early stages of 50S assembly. It makes multiple contacts with different domains of the 23S rRNA in the assembled 50S subunit and ribosome. Forms part of the polypeptide exit tunnel. The protein is Large ribosomal subunit protein uL4 of Alcanivorax borkumensis (strain ATCC 700651 / DSM 11573 / NCIMB 13689 / SK2).